Consider the following 497-residue polypeptide: Glutamyl-tRNA(Gln) amidotransferase subunit A (497 aa).

Active-site charge relay system residues include K85 and S160. Residue S184 is the Acyl-ester intermediate of the active site.

Belongs to the amidase family. GatA subfamily. In terms of assembly, heterotrimer of A, B and C subunits.

The catalysed reaction is L-glutamyl-tRNA(Gln) + L-glutamine + ATP + H2O = L-glutaminyl-tRNA(Gln) + L-glutamate + ADP + phosphate + H(+). Functionally, allows the formation of correctly charged Gln-tRNA(Gln) through the transamidation of misacylated Glu-tRNA(Gln) in organisms which lack glutaminyl-tRNA synthetase. The reaction takes place in the presence of glutamine and ATP through an activated gamma-phospho-Glu-tRNA(Gln). The protein is Glutamyl-tRNA(Gln) amidotransferase subunit A (gatA) of Mycobacterium leprae (strain TN).